A 184-amino-acid polypeptide reads, in one-letter code: ATP synthase subunit delta (184 aa).

Belongs to the ATPase delta chain family. F-type ATPases have 2 components, F(1) - the catalytic core - and F(0) - the membrane proton channel. F(1) has five subunits: alpha(3), beta(3), gamma(1), delta(1), epsilon(1). F(0) has three main subunits: a(1), b(2) and c(10-14). The alpha and beta chains form an alternating ring which encloses part of the gamma chain. F(1) is attached to F(0) by a central stalk formed by the gamma and epsilon chains, while a peripheral stalk is formed by the delta and b chains.

It localises to the cell inner membrane. F(1)F(0) ATP synthase produces ATP from ADP in the presence of a proton or sodium gradient. F-type ATPases consist of two structural domains, F(1) containing the extramembraneous catalytic core and F(0) containing the membrane proton channel, linked together by a central stalk and a peripheral stalk. During catalysis, ATP synthesis in the catalytic domain of F(1) is coupled via a rotary mechanism of the central stalk subunits to proton translocation. Its function is as follows. This protein is part of the stalk that links CF(0) to CF(1). It either transmits conformational changes from CF(0) to CF(1) or is implicated in proton conduction. The protein is ATP synthase subunit delta of Zymomonas mobilis subsp. mobilis (strain ATCC 31821 / ZM4 / CP4).